We begin with the raw amino-acid sequence, 91 residues long: HssA/B-like protein 52 (91 aa).

Disordered stretches follow at residues M1–S20 and G72–I91.

The protein belongs to the hssA/B family.

The protein is HssA/B-like protein 52 (hssl52) of Dictyostelium discoideum (Social amoeba).